Here is a 765-residue protein sequence, read N- to C-terminus: Protein transport protein sec23-2 (765 aa).

Residues Cys-56, Cys-60, Cys-79, and Cys-82 each coordinate Zn(2+). Ser-565 and Ser-566 each carry phosphoserine.

The protein belongs to the SEC23/SEC24 family. SEC23 subfamily. As to quaternary structure, the COPII coat is composed of at least 5 proteins: the sec23/24 complex, the sec13/31 complex, and the protein sar1.

It localises to the cytoplasm. It is found in the cytoplasmic vesicle. The protein resides in the COPII-coated vesicle membrane. Its subcellular location is the endoplasmic reticulum membrane. The protein localises to the golgi apparatus membrane. Functionally, component of the coat protein complex II (COPII) which promotes the formation of transport vesicles from the endoplasmic reticulum (ER). The coat has two main functions, the physical deformation of the endoplasmic reticulum membrane into vesicles and the selection of cargo molecules. The sequence is that of Protein transport protein sec23-2 (sec232) from Schizosaccharomyces pombe (strain 972 / ATCC 24843) (Fission yeast).